Consider the following 216-residue polypeptide: Octanoyltransferase (216 aa).

Positions Lys-24–Asn-212 constitute a BPL/LPL catalytic domain. Substrate-binding positions include Arg-69 to His-76, Ser-140 to Gly-142, and Gly-153 to Ala-155. Cys-171 acts as the Acyl-thioester intermediate in catalysis.

This sequence belongs to the LipB family.

The protein localises to the cytoplasm. The catalysed reaction is octanoyl-[ACP] + L-lysyl-[protein] = N(6)-octanoyl-L-lysyl-[protein] + holo-[ACP] + H(+). It participates in protein modification; protein lipoylation via endogenous pathway; protein N(6)-(lipoyl)lysine from octanoyl-[acyl-carrier-protein]: step 1/2. Its function is as follows. Catalyzes the transfer of endogenously produced octanoic acid from octanoyl-acyl-carrier-protein onto the lipoyl domains of lipoate-dependent enzymes. Lipoyl-ACP can also act as a substrate although octanoyl-ACP is likely to be the physiological substrate. The chain is Octanoyltransferase from Leptospira interrogans serogroup Icterohaemorrhagiae serovar Lai (strain 56601).